The chain runs to 508 residues: Light-independent protochlorophyllide reductase subunit B (508 aa).

Asp-36 contacts [4Fe-4S] cluster. Asp-282 serves as the catalytic Proton donor. 417 to 418 provides a ligand contact to substrate; it reads GL.

Belongs to the ChlB/BchB/BchZ family. As to quaternary structure, protochlorophyllide reductase is composed of three subunits; BchL, BchN and BchB. Forms a heterotetramer of two BchB and two BchN subunits. Requires [4Fe-4S] cluster as cofactor.

The catalysed reaction is chlorophyllide a + oxidized 2[4Fe-4S]-[ferredoxin] + 2 ADP + 2 phosphate = protochlorophyllide a + reduced 2[4Fe-4S]-[ferredoxin] + 2 ATP + 2 H2O. The protein operates within porphyrin-containing compound metabolism; bacteriochlorophyll biosynthesis (light-independent). Functionally, component of the dark-operative protochlorophyllide reductase (DPOR) that uses Mg-ATP and reduced ferredoxin to reduce ring D of protochlorophyllide (Pchlide) to form chlorophyllide a (Chlide). This reaction is light-independent. The NB-protein (BchN-BchB) is the catalytic component of the complex. The polypeptide is Light-independent protochlorophyllide reductase subunit B (Methylocella silvestris (strain DSM 15510 / CIP 108128 / LMG 27833 / NCIMB 13906 / BL2)).